Reading from the N-terminus, the 261-residue chain is Uridine-cytidine kinase 2 (261 aa).

Residues Met-1 to Val-24 form a disordered region. An ATP-binding site is contributed by Gly-26–Ser-34. Substrate contacts are provided by Asp-83, Tyr-111, His-116, Arg-165, Arg-175, and Gln-183. Position 212 (Asp-212) interacts with ATP. Polar residues predominate over residues Asn-238–Pro-247. Positions Asn-238–His-261 are disordered.

The protein belongs to the uridine kinase family. Homotetramer.

It catalyses the reaction uridine + ATP = UMP + ADP + H(+). It carries out the reaction cytidine + ATP = CMP + ADP + H(+). The protein operates within pyrimidine metabolism; CTP biosynthesis via salvage pathway; CTP from cytidine: step 1/3. It functions in the pathway pyrimidine metabolism; UMP biosynthesis via salvage pathway; UMP from uridine: step 1/1. Its function is as follows. Phosphorylates uridine and cytidine to uridine monophosphate and cytidine monophosphate. Does not phosphorylate deoxyribonucleosides or purine ribonucleosides. Can use ATP or GTP as a phosphate donor. This is Uridine-cytidine kinase 2 (uck2) from Xenopus tropicalis (Western clawed frog).